The chain runs to 177 residues: Large ribosomal subunit protein uL6 (177 aa).

Belongs to the universal ribosomal protein uL6 family. Part of the 50S ribosomal subunit.

Its function is as follows. This protein binds to the 23S rRNA, and is important in its secondary structure. It is located near the subunit interface in the base of the L7/L12 stalk, and near the tRNA binding site of the peptidyltransferase center. The chain is Large ribosomal subunit protein uL6 from Rhizobium meliloti (strain 1021) (Ensifer meliloti).